We begin with the raw amino-acid sequence, 398 residues long: Candidapepsin-3 (398 aa).

Residues M1–A18 form the signal peptide. Positions T19–R58 are cleaved as a propeptide — activation peptide. The N-linked (GlcNAc...) asparagine glycan is linked to N42. Residues Y72–A384 form the Peptidase A1 domain. The active site involves D90. D90–G92 serves as a coordination point for pepstatin A. The span at V103–D112 shows a compositional bias: polar residues. Residues V103 to I139 are disordered. A disulfide bridge connects residues C105 and C116. The span at S123–S138 shows a compositional bias: low complexity. Pepstatin A is bound by residues E140–D143 and D274–T278. D274 is an active-site residue. C312 and C350 form a disulfide bridge. An N-linked (GlcNAc...) asparagine glycan is attached at N313.

Belongs to the peptidase A1 family. In terms of processing, O-glycosylated.

The protein localises to the secreted. It carries out the reaction Preferential cleavage at the carboxyl of hydrophobic amino acids, but fails to cleave 15-Leu-|-Tyr-16, 16-Tyr-|-Leu-17 and 24-Phe-|-Phe-25 of insulin B chain. Activates trypsinogen, and degrades keratin.. In Candida albicans (strain WO-1) (Yeast), this protein is Candidapepsin-3 (SAP3).